A 223-amino-acid chain; its full sequence is UPF0758 protein HD_0732 (223 aa).

The region spanning 98–220 is the MPN domain; the sequence is TINTPHLAIM…YFSFEEERFH (123 aa). Zn(2+) contacts are provided by histidine 169, histidine 171, and aspartate 182. Residues 169–182 carry the JAMM motif motif; it reads HNHPSGNCTASQAD.

This sequence belongs to the UPF0758 family.

This Haemophilus ducreyi (strain 35000HP / ATCC 700724) protein is UPF0758 protein HD_0732.